A 1048-amino-acid chain; its full sequence is Probable beta-glucosidase E (1048 aa).

The disordered stretch occupies residues 1–54; sequence MPPPPFRDAPSSAKSSQRYTPLHESIPEELNDKQYSSDADSLPLSDPSDGEDDS. Residues 1–150 lie on the Cytoplasmic side of the membrane; the sequence is MPPPPFRDAP…WRTVYYSKYW (150 aa). A compositionally biased stretch (low complexity) spans 36 to 47; sequence SSDADSLPLSDP. A helical; Signal-anchor for type II membrane protein membrane pass occupies residues 151-171; sequence WRALIGVVVVLVLLVLVFLGL. At 172-1048 the chain is on the extracellular side; it reads ARSKQVGDEL…SRDLPLHGKY (877 aa). 3 N-linked (GlcNAc...) asparagine glycosylation sites follow: N216, N224, and N410. D438 is a catalytic residue. N481, N520, N578, N895, and N991 each carry an N-linked (GlcNAc...) asparagine glycan. Residues 508–527 form a disordered region; it reads WERPPPDGEGGPNFSSWTDD.

Belongs to the glycosyl hydrolase 3 family.

Its subcellular location is the cell membrane. The enzyme catalyses Hydrolysis of terminal, non-reducing beta-D-glucosyl residues with release of beta-D-glucose.. The protein operates within glycan metabolism; cellulose degradation. Its function is as follows. Beta-glucosidases are one of a number of cellulolytic enzymes involved in the degradation of cellulosic biomass. Catalyzes the last step releasing glucose from the inhibitory cellobiose. The protein is Probable beta-glucosidase E (bglE) of Aspergillus oryzae (strain ATCC 42149 / RIB 40) (Yellow koji mold).